The sequence spans 563 residues: Tripeptidyl-peptidase 1 (563 aa).

The N-terminal stretch at 1 to 19 is a signal peptide; it reads MGLQACLLGLFALILSGKC. A propeptide spans 20 to 195 (removed in mature form); it reads SYSPEPDQRR…PEPQVTGTVG (176 aa). A disulfide bridge links cysteine 111 with cysteine 122. Residues 199 to 563 form the Peptidase S53 domain; sequence GVTPSVIRKR…PALLKTLLNP (365 aa). N-linked (GlcNAc...) asparagine glycans are attached at residues asparagine 210 and asparagine 222. Residues glutamate 272 and aspartate 276 each act as charge relay system in the active site. N-linked (GlcNAc...) asparagine glycans are attached at residues asparagine 286, asparagine 313, and asparagine 443. 2 cysteine pairs are disulfide-bonded: cysteine 365–cysteine 526 and cysteine 522–cysteine 537. Catalysis depends on serine 475, which acts as the Charge relay system. Ca(2+) contacts are provided by aspartate 517 and valine 518. Glycine 539, glycine 541, and aspartate 543 together coordinate Ca(2+).

Monomer. Interacts with CLN5. Interacts with CLN3. Ca(2+) is required as a cofactor. Activated by autocatalytic proteolytical processing upon acidification. N-glycosylation is required for processing and activity.

It localises to the lysosome. Its subcellular location is the melanosome. It carries out the reaction Release of an N-terminal tripeptide from a polypeptide, but also has endopeptidase activity.. In terms of biological role, lysosomal serine protease with tripeptidyl-peptidase I activity. May act as a non-specific lysosomal peptidase which generates tripeptides from the breakdown products produced by lysosomal proteinases. Requires substrates with an unsubstituted N-terminus. This Macaca fascicularis (Crab-eating macaque) protein is Tripeptidyl-peptidase 1 (TPP1).